Consider the following 94-residue polypeptide: Pyrimidine/purine nucleoside phosphorylase (94 aa).

The protein belongs to the nucleoside phosphorylase PpnP family.

The enzyme catalyses a purine D-ribonucleoside + phosphate = a purine nucleobase + alpha-D-ribose 1-phosphate. It carries out the reaction adenosine + phosphate = alpha-D-ribose 1-phosphate + adenine. The catalysed reaction is cytidine + phosphate = cytosine + alpha-D-ribose 1-phosphate. It catalyses the reaction guanosine + phosphate = alpha-D-ribose 1-phosphate + guanine. The enzyme catalyses inosine + phosphate = alpha-D-ribose 1-phosphate + hypoxanthine. It carries out the reaction thymidine + phosphate = 2-deoxy-alpha-D-ribose 1-phosphate + thymine. The catalysed reaction is uridine + phosphate = alpha-D-ribose 1-phosphate + uracil. It catalyses the reaction xanthosine + phosphate = alpha-D-ribose 1-phosphate + xanthine. Functionally, catalyzes the phosphorolysis of diverse nucleosides, yielding D-ribose 1-phosphate and the respective free bases. Can use uridine, adenosine, guanosine, cytidine, thymidine, inosine and xanthosine as substrates. Also catalyzes the reverse reactions. This chain is Pyrimidine/purine nucleoside phosphorylase, found in Shigella dysenteriae serotype 1 (strain Sd197).